The sequence spans 284 residues: Nucleotide-binding protein Pput_0988 (284 aa).

8 to 15 (GRSGSGKS) contacts ATP. GTP is bound at residue 60–63 (DARN).

This sequence belongs to the RapZ-like family.

Its function is as follows. Displays ATPase and GTPase activities. This Pseudomonas putida (strain ATCC 700007 / DSM 6899 / JCM 31910 / BCRC 17059 / LMG 24140 / F1) protein is Nucleotide-binding protein Pput_0988.